Reading from the N-terminus, the 223-residue chain is Ubiquitin carboxyl-terminal hydrolase isozyme L1 (223 aa).

Residue M1 is modified to N-acetylmethionine. Positions 2–221 constitute a UCH catalytic domain; it reads QLKPMEINPE…VRFSAVALCK (220 aa). The interval 5–10 is interaction with ubiquitin; that stretch reads PMEINP. Catalysis depends on C90, which acts as the Nucleophile. S125 carries the post-translational modification Phosphoserine. The Proton donor role is filled by H161. The interaction with ubiquitin stretch occupies residues 211–216; sequence EVRFSA. Residue C220 is the site of S-farnesyl cysteine attachment. A propeptide spans 221–223 (removed in mature form); it reads KCA.

Belongs to the peptidase C12 family. Monomer. Homodimer. Interacts with COPS5 and SNCA. Post-translationally, O-glycosylated.

It is found in the cytoplasm. It localises to the endoplasmic reticulum membrane. The catalysed reaction is Thiol-dependent hydrolysis of ester, thioester, amide, peptide and isopeptide bonds formed by the C-terminal Gly of ubiquitin (a 76-residue protein attached to proteins as an intracellular targeting signal).. In terms of biological role, ubiquitin-protein hydrolase involved both in the processing of ubiquitin precursors and of ubiquitinated proteins. This enzyme is a thiol protease that recognizes and hydrolyzes a peptide bond at the C-terminal glycine of ubiquitin. Also binds to free monoubiquitin and may prevent its degradation in lysosomes. The homodimer may have ATP-independent ubiquitin ligase activity. This chain is Ubiquitin carboxyl-terminal hydrolase isozyme L1 (UCHL1), found in Monodelphis domestica (Gray short-tailed opossum).